The sequence spans 250 residues: MSILEKIQEKQPLILNLANFVTPQRVADAISFAGGSPLMTAEISESETLVEIADAVVVNIGTISEKDYPLFLTICQLANQKHKPLILDPVAVNVPFRANFVKRLMQEVKFDIIRGNSAEIAWFADKESLNKGIDALESNLEVEHARVAAQKTGAVIIQTGKVDVISNGFEELFVETDSPLFKINVGCGDMLSAIVGTFAAVSDDLFKAAYEATEFFGESGVKATEQVENLPGNFVNRFLDKIYQATQEVI.

Met39 is a substrate binding site. Residues Arg114 and Thr159 each coordinate ATP. Position 186 (Gly186) interacts with substrate.

It belongs to the Thz kinase family. Mg(2+) is required as a cofactor.

It carries out the reaction 5-(2-hydroxyethyl)-4-methylthiazole + ATP = 4-methyl-5-(2-phosphooxyethyl)-thiazole + ADP + H(+). The protein operates within cofactor biosynthesis; thiamine diphosphate biosynthesis; 4-methyl-5-(2-phosphoethyl)-thiazole from 5-(2-hydroxyethyl)-4-methylthiazole: step 1/1. Its function is as follows. Catalyzes the phosphorylation of the hydroxyl group of 4-methyl-5-beta-hydroxyethylthiazole (THZ). The polypeptide is Hydroxyethylthiazole kinase (Lactococcus lactis subsp. lactis (strain IL1403) (Streptococcus lactis)).